We begin with the raw amino-acid sequence, 240 residues long: Ribonuclease HII (240 aa).

An RNase H type-2 domain is found at Gly21–Val210. A divalent metal cation is bound by residues Asp27, Glu28, and Asp119.

This sequence belongs to the RNase HII family. Mn(2+) is required as a cofactor. It depends on Mg(2+) as a cofactor.

It localises to the cytoplasm. The enzyme catalyses Endonucleolytic cleavage to 5'-phosphomonoester.. In terms of biological role, endonuclease that specifically degrades the RNA of RNA-DNA hybrids. The protein is Ribonuclease HII of Paracidovorax citrulli (strain AAC00-1) (Acidovorax citrulli).